The chain runs to 161 residues: Nucleotide-binding protein Rmet_2899 (161 aa).

Belongs to the YajQ family.

Nucleotide-binding protein. The protein is Nucleotide-binding protein Rmet_2899 of Cupriavidus metallidurans (strain ATCC 43123 / DSM 2839 / NBRC 102507 / CH34) (Ralstonia metallidurans).